We begin with the raw amino-acid sequence, 147 residues long: TRAP-T-associated universal stress protein TeaD (147 aa).

Residues 8–10 (PVD), valine 38, 117–122 (GAQGTN), and 131–133 (SVA) contribute to the ATP site.

The protein belongs to the universal stress protein A family. In terms of assembly, homodimer or homotetramer; in equilibrium. The dimer/tetramer ratio is ATP-dependent. ATP stabilizes dimer-dimer complexes, with one ATP molecule bound to each monomer.

Its subcellular location is the cytoplasm. Its function is as follows. ATP-binding protein that negatively regulates activity of the tripartite ATP-independent periplasmic (TRAP) ectoine transport system TeaABC. May regulate uptake according to the ATP status of the cell. The protein is TRAP-T-associated universal stress protein TeaD (teaD) of Halomonas elongata (strain ATCC 33173 / DSM 2581 / NBRC 15536 / NCIMB 2198 / 1H9).